The following is a 429-amino-acid chain: Adenylosuccinate synthetase (429 aa).

GTP is bound by residues G12–K18 and G40–T42. D13 (proton acceptor) is an active-site residue. 2 residues coordinate Mg(2+): D13 and G40. Residues D13 to K16, N38 to H41, T129, R143, Q224, T239, and R303 each bind IMP. H41 functions as the Proton donor in the catalytic mechanism. Residue A299 to R305 participates in substrate binding. GTP-binding positions include R305, K331 to D333, and S413 to G415.

Belongs to the adenylosuccinate synthetase family. In terms of assembly, homodimer. Mg(2+) is required as a cofactor.

The protein localises to the cytoplasm. The enzyme catalyses IMP + L-aspartate + GTP = N(6)-(1,2-dicarboxyethyl)-AMP + GDP + phosphate + 2 H(+). It functions in the pathway purine metabolism; AMP biosynthesis via de novo pathway; AMP from IMP: step 1/2. Functionally, plays an important role in the de novo pathway of purine nucleotide biosynthesis. Catalyzes the first committed step in the biosynthesis of AMP from IMP. This is Adenylosuccinate synthetase from Desulfosudis oleivorans (strain DSM 6200 / JCM 39069 / Hxd3) (Desulfococcus oleovorans).